Consider the following 318-residue polypeptide: Basic leucine zipper (bZIP) transcription factor atfB (318 aa).

Disordered regions lie at residues Leu79–Gln100 and Phe114–Glu164. A basic motif region spans residues Arg160–Lys199. The bZIP domain maps to Arg160–His223. The tract at residues Leu202–Leu216 is leucine-zipper. The tract at residues Thr247–Tyr304 is disordered.

The protein belongs to the bZIP family. ATF subfamily.

It localises to the nucleus. Functionally, transcription factor that acts as a key player in the regulatory circuit that integrates secondary metabolism and cellular response to oxidative stress. Regulates the genes involved in development, stress response, and secondary metabolism through direct binding to their promoters. Particularly involved in the resistance to oxidative stress in asexual conidiospores. Binds aflatoxin gene promoters carrying the cAMP-response element (CRE1) under aflatoxin-inducing conditions. The polypeptide is Basic leucine zipper (bZIP) transcription factor atfB (Aspergillus parasiticus (strain ATCC 56775 / NRRL 5862 / SRRC 143 / SU-1)).